A 353-amino-acid polypeptide reads, in one-letter code: Holliday junction branch migration complex subunit RuvB (353 aa).

Residues 4-190 (TDKLQAPRVI…FGIVARLEFY (187 aa)) are large ATPase domain (RuvB-L). Residues leucine 29, arginine 30, glycine 71, lysine 74, threonine 75, threonine 76, 137-139 (EDF), arginine 180, tyrosine 190, and arginine 227 each bind ATP. Mg(2+) is bound at residue threonine 75. The small ATPAse domain (RuvB-S) stretch occupies residues 191-261 (TPHELAYIVG…VADAALLMLD (71 aa)). The head domain (RuvB-H) stretch occupies residues 264-353 (HLGLDLMDRK…DESAELFSAP (90 aa)). DNA contacts are provided by arginine 319 and arginine 324.

This sequence belongs to the RuvB family. As to quaternary structure, homohexamer. Forms an RuvA(8)-RuvB(12)-Holliday junction (HJ) complex. HJ DNA is sandwiched between 2 RuvA tetramers; dsDNA enters through RuvA and exits via RuvB. An RuvB hexamer assembles on each DNA strand where it exits the tetramer. Each RuvB hexamer is contacted by two RuvA subunits (via domain III) on 2 adjacent RuvB subunits; this complex drives branch migration. In the full resolvosome a probable DNA-RuvA(4)-RuvB(12)-RuvC(2) complex forms which resolves the HJ.

Its subcellular location is the cytoplasm. The catalysed reaction is ATP + H2O = ADP + phosphate + H(+). In terms of biological role, the RuvA-RuvB-RuvC complex processes Holliday junction (HJ) DNA during genetic recombination and DNA repair, while the RuvA-RuvB complex plays an important role in the rescue of blocked DNA replication forks via replication fork reversal (RFR). RuvA specifically binds to HJ cruciform DNA, conferring on it an open structure. The RuvB hexamer acts as an ATP-dependent pump, pulling dsDNA into and through the RuvAB complex. RuvB forms 2 homohexamers on either side of HJ DNA bound by 1 or 2 RuvA tetramers; 4 subunits per hexamer contact DNA at a time. Coordinated motions by a converter formed by DNA-disengaged RuvB subunits stimulates ATP hydrolysis and nucleotide exchange. Immobilization of the converter enables RuvB to convert the ATP-contained energy into a lever motion, pulling 2 nucleotides of DNA out of the RuvA tetramer per ATP hydrolyzed, thus driving DNA branch migration. The RuvB motors rotate together with the DNA substrate, which together with the progressing nucleotide cycle form the mechanistic basis for DNA recombination by continuous HJ branch migration. Branch migration allows RuvC to scan DNA until it finds its consensus sequence, where it cleaves and resolves cruciform DNA. The sequence is that of Holliday junction branch migration complex subunit RuvB from Aromatoleum aromaticum (strain DSM 19018 / LMG 30748 / EbN1) (Azoarcus sp. (strain EbN1)).